The sequence spans 414 residues: Protein phosphatase 2C homolog 3 (414 aa).

The 266-residue stretch at 23 to 288 (LYGLSSMQGW…DNMTVCIVAL (266 aa)) folds into the PPM-type phosphatase domain. 4 residues coordinate Mn(2+): Asp-62, Gly-63, Asp-230, and Asp-279. 2 disordered regions span residues 313-368 (APPE…TNGS) and 380-414 (FPHKAEEENSSSETDIVNSNKDVADDHKEAVSAAD). The span at 350–363 (GYDKDANENSKEDD) shows a compositional bias: basic and acidic residues. The segment covering 390-400 (SSETDIVNSNK) has biased composition (polar residues). Positions 401 to 414 (DVADDHKEAVSAAD) are enriched in basic and acidic residues.

It belongs to the PP2C family. In terms of assembly, monomer. It depends on Mg(2+) as a cofactor. The cofactor is Mn(2+).

Its subcellular location is the cytoplasm. The protein localises to the nucleus. It carries out the reaction O-phospho-L-seryl-[protein] + H2O = L-seryl-[protein] + phosphate. It catalyses the reaction O-phospho-L-threonyl-[protein] + H2O = L-threonyl-[protein] + phosphate. In terms of biological role, dephosphorylating regulator for many key proteins. Has an important role in osmotic stability and cell shape control. It may negatively regulate the osmosensing signal transmitted through wis1 map kinase. The protein is Protein phosphatase 2C homolog 3 (ptc3) of Schizosaccharomyces pombe (strain 972 / ATCC 24843) (Fission yeast).